The sequence spans 133 residues: Ycf54-like protein (133 aa).

It belongs to the ycf54 family.

The chain is Ycf54-like protein from Synechocystis sp. (strain ATCC 27184 / PCC 6803 / Kazusa).